The following is a 348-amino-acid chain: AT-hook motif nuclear-localized protein 9 (348 aa).

Positions 18 to 156 (HRGLSGSGPP…MASVGELMPS (139 aa)) are disordered. Polar residues predominate over residues 31–46 (GSPQQQQGLRHLPNQN). The span at 47–60 (SPFGSGSTGFGSPS) shows a compositional bias: low complexity. The short motif at 98–106 (KRKRGRPRK) is the Bipartite nuclear localization signal element. The a.T hook 1 DNA-binding region spans 98–110 (KRKRGRPRKYGQD). Residues 112-131 (SVSLALSSSSVSTITPNNSN) are compositionally biased toward low complexity. The segment at residues 132-144 (KRGRGRPPGSGKK) is a DNA-binding region (a.T hook 2). Positions 157-299 (SSGMSFTPHV…EEEASEVVQE (143 aa)) constitute a PPC domain.

It localises to the nucleus. Transcription factor that specifically binds AT-rich DNA sequences related to the nuclear matrix attachment regions (MARs). This Arabidopsis thaliana (Mouse-ear cress) protein is AT-hook motif nuclear-localized protein 9.